A 498-amino-acid chain; its full sequence is Pyruvate kinase (498 aa).

Arg53 contributes to the substrate binding site. K(+)-binding residues include Asn55, Ser57, Asp87, and Thr88. 55–58 is a binding site for ATP; sequence NFSH. ATP-binding residues include Arg94 and Lys178. Glu240 contacts Mg(2+). Substrate-binding residues include Gly263, Asp264, and Thr296. Asp264 lines the Mg(2+) pocket.

Belongs to the pyruvate kinase family. In terms of assembly, homotetramer. Mg(2+) is required as a cofactor. K(+) serves as cofactor.

The enzyme catalyses pyruvate + ATP = phosphoenolpyruvate + ADP + H(+). It functions in the pathway carbohydrate degradation; glycolysis; pyruvate from D-glyceraldehyde 3-phosphate: step 5/5. This Trypanoplasma borreli protein is Pyruvate kinase (PYK).